The primary structure comprises 1097 residues: DNA polymerase catalytic subunit (1097 aa).

A disordered region spans residues 1069–1097 (RGGDDSDGGDSEKENMDTERSSSHEAMET). The segment covering 1078-1097 (DSEKENMDTERSSSHEAMET) has biased composition (basic and acidic residues).

It belongs to the DNA polymerase type-B family.

It localises to the host nucleus. The catalysed reaction is DNA(n) + a 2'-deoxyribonucleoside 5'-triphosphate = DNA(n+1) + diphosphate. This chain is DNA polymerase catalytic subunit (UL54), found in Murid herpesvirus 1 (strain Smith) (MuHV-1).